A 59-amino-acid polypeptide reads, in one-letter code: Large ribosomal subunit protein bL32 (59 aa).

The interval 1–59 (MAVQQNKKSPSKRGMHRSHDALTAPALFVDSTTGEVHRPHHISPNGMYRGRKVVKAKGE) is disordered. The segment covering 49–59 (RGRKVVKAKGE) has biased composition (basic residues).

Belongs to the bacterial ribosomal protein bL32 family.

This Neisseria gonorrhoeae (strain ATCC 700825 / FA 1090) protein is Large ribosomal subunit protein bL32.